A 226-amino-acid polypeptide reads, in one-letter code: UPF0758 protein PsycPRwf_0491 (226 aa).

Residues 102–224 enclose the MPN domain; that stretch reads SLNRSQVVKD…TLSFAETATA (123 aa). Zn(2+) contacts are provided by His-173, His-175, and Asp-186. A JAMM motif motif is present at residues 173–186; the sequence is HNHPNQDATPSAAD.

The protein belongs to the UPF0758 family.

This Psychrobacter sp. (strain PRwf-1) protein is UPF0758 protein PsycPRwf_0491.